Here is a 426-residue protein sequence, read N- to C-terminus: Enolase (426 aa).

Residue glutamine 163 participates in (2R)-2-phosphoglycerate binding. Glutamate 205 serves as the catalytic Proton donor. Residues aspartate 242, glutamate 285, and aspartate 312 each coordinate Mg(2+). Positions 337, 366, 367, and 388 each coordinate (2R)-2-phosphoglycerate. Lysine 337 acts as the Proton acceptor in catalysis.

It belongs to the enolase family. Mg(2+) serves as cofactor.

It localises to the cytoplasm. The protein resides in the secreted. It is found in the cell surface. It catalyses the reaction (2R)-2-phosphoglycerate = phosphoenolpyruvate + H2O. Its pathway is carbohydrate degradation; glycolysis; pyruvate from D-glyceraldehyde 3-phosphate: step 4/5. Its function is as follows. Catalyzes the reversible conversion of 2-phosphoglycerate (2-PG) into phosphoenolpyruvate (PEP). It is essential for the degradation of carbohydrates via glycolysis. In Nitrobacter winogradskyi (strain ATCC 25391 / DSM 10237 / CIP 104748 / NCIMB 11846 / Nb-255), this protein is Enolase.